We begin with the raw amino-acid sequence, 361 residues long: S-adenosylmethionine:tRNA ribosyltransferase-isomerase (361 aa).

It belongs to the QueA family. In terms of assembly, monomer.

Its subcellular location is the cytoplasm. The enzyme catalyses 7-aminomethyl-7-carbaguanosine(34) in tRNA + S-adenosyl-L-methionine = epoxyqueuosine(34) in tRNA + adenine + L-methionine + 2 H(+). It functions in the pathway tRNA modification; tRNA-queuosine biosynthesis. Transfers and isomerizes the ribose moiety from AdoMet to the 7-aminomethyl group of 7-deazaguanine (preQ1-tRNA) to give epoxyqueuosine (oQ-tRNA). The protein is S-adenosylmethionine:tRNA ribosyltransferase-isomerase of Actinobacillus pleuropneumoniae serotype 5b (strain L20).